A 170-amino-acid polypeptide reads, in one-letter code: Translationally-controlled tumor protein homolog (170 aa).

A TCTP domain is found at 1-170 (MIIYKCIISG…FKDGLLAEKC (170 aa)).

This sequence belongs to the TCTP family.

It localises to the cytoplasm. In terms of biological role, involved in calcium binding and microtubule stabilization. This is Translationally-controlled tumor protein homolog (tpt1) from Lateolabrax japonicus (Japanese sea perch).